The chain runs to 621 residues: 1-deoxy-D-xylulose-5-phosphate synthase (621 aa).

Residues histidine 80 and glycine 121–serine 123 contribute to the thiamine diphosphate site. Mg(2+) is bound at residue aspartate 152. Thiamine diphosphate is bound by residues glycine 153–alanine 154, asparagine 181, tyrosine 288, and glutamate 370. Asparagine 181 lines the Mg(2+) pocket.

The protein belongs to the transketolase family. DXPS subfamily. As to quaternary structure, homodimer. The cofactor is Mg(2+). Thiamine diphosphate is required as a cofactor.

The enzyme catalyses D-glyceraldehyde 3-phosphate + pyruvate + H(+) = 1-deoxy-D-xylulose 5-phosphate + CO2. The protein operates within metabolic intermediate biosynthesis; 1-deoxy-D-xylulose 5-phosphate biosynthesis; 1-deoxy-D-xylulose 5-phosphate from D-glyceraldehyde 3-phosphate and pyruvate: step 1/1. In terms of biological role, catalyzes the acyloin condensation reaction between C atoms 2 and 3 of pyruvate and glyceraldehyde 3-phosphate to yield 1-deoxy-D-xylulose-5-phosphate (DXP). The chain is 1-deoxy-D-xylulose-5-phosphate synthase from Vibrio parahaemolyticus serotype O3:K6 (strain RIMD 2210633).